We begin with the raw amino-acid sequence, 470 residues long: Glutamate--tRNA ligase (470 aa).

A 'HIGH' region motif is present at residues 9–19; that stretch reads PSPTGFLHVGG. Positions 236-240 match the 'KMSKS' region motif; the sequence is KLSKR. K239 contributes to the ATP binding site.

This sequence belongs to the class-I aminoacyl-tRNA synthetase family. Glutamate--tRNA ligase type 1 subfamily. Monomer.

The protein localises to the cytoplasm. It catalyses the reaction tRNA(Glu) + L-glutamate + ATP = L-glutamyl-tRNA(Glu) + AMP + diphosphate. Functionally, catalyzes the attachment of glutamate to tRNA(Glu) in a two-step reaction: glutamate is first activated by ATP to form Glu-AMP and then transferred to the acceptor end of tRNA(Glu). This Psychromonas ingrahamii (strain DSM 17664 / CCUG 51855 / 37) protein is Glutamate--tRNA ligase.